A 625-amino-acid chain; its full sequence is Low affinity potassium transport system protein Kup (625 aa).

12 helical membrane passes run 15 to 35 (TIFSTINVLHGLIAISPIYII), 58 to 78 (IIFWTLFFIIFLKYLILIVSI), 103 to 123 (FVIVILGLISMCLFFGDIIII), 140 to 160 (LSFEKFIFIISIAIFTFLFFI), 171 to 191 (IFSFLISIWFILVGLIGLKGI), 218 to 238 (FFVFGTLILLISISEILYINI), 251 to 271 (LFFVFPMIMINCFGQGSIILL), 282 to 302 (FLVPDWARFFTFTFAIIISII), 340 to 360 (IYIPCINWIFYLSAVIQISIF), 366 to 386 (LILIYGIGSIITMSLTTFFSL), 396 to 416 (FKILKITFLLTILILEFFIFI), and 422 to 442 (IICGGWFPIVFGIIFFTIMIT).

It belongs to the HAK/KUP transporter (TC 2.A.72) family.

It is found in the cell membrane. The enzyme catalyses K(+)(in) + H(+)(in) = K(+)(out) + H(+)(out). In terms of biological role, responsible for the low-affinity transport of potassium into the cell. Likely operates as a K(+):H(+) symporter. The polypeptide is Low affinity potassium transport system protein Kup (Wigglesworthia glossinidia brevipalpis).